Reading from the N-terminus, the 481-residue chain is uncharacterized protein (481 aa).

11 helical membrane-spanning segments follow: residues 14–34 (LGFCSVVMLGINSIIGAGIFL), 46–66 (FAPMAYVLAGIFAGVVAIVFA), 90–110 (IGIYVGVTHAITASIAWGVLA), 134–154 (FSVKTLTFLGFIGVLLAINLF), 167–187 (TVGKAFALSAFIVGGLWIITT), 218–238 (FSSMALATIVALYAFTGFESI), 258–278 (IAIFSVGAIYLLTLTVAMLLG), 303–323 (IIVVGALISMFGINVAASFGA), 377–397 (LAVIARFVQFIIVPIALIALA), 411–431 (AFTDKVLPLVAIVVSVGLAVS), and 446–466 (YFSIALIVITFIVVPAMAYLH).

This sequence belongs to the amino acid-polyamine-organocation (APC) superfamily.

The protein resides in the cell membrane. Its function is as follows. Probable amino-acid or metabolite transport protein. This is an uncharacterized protein from Mycobacterium bovis (strain ATCC BAA-935 / AF2122/97).